Reading from the N-terminus, the 321-residue chain is Torsin-2A (321 aa).

The signal sequence occupies residues 1–26 (MAAATRSCRPWGSLLGLIWLVSAAAA). 93 to 100 (GWTGTGKS) is a binding site for ATP. Asn149 carries an N-linked (GlcNAc...) asparagine glycan.

It belongs to the ClpA/ClpB family. Torsin subfamily. As to quaternary structure, homohexamer. Interacts with TOR1AIP1.

Its subcellular location is the endoplasmic reticulum lumen. This is Torsin-2A (TOR2A) from Bos taurus (Bovine).